Here is a 115-residue protein sequence, read N- to C-terminus: Pancreatic progenitor cell differentiation and proliferation factor B (115 aa).

Positions 21–48 (IGSTSSSSSCGSSEYSGEVIPHHPGLPK) are disordered. A compositionally biased stretch (low complexity) spans 22 to 37 (GSTSSSSSCGSSEYSG).

The protein belongs to the PPDPF family.

In terms of biological role, probable regulator of exocrine pancreas development. This chain is Pancreatic progenitor cell differentiation and proliferation factor B (ppdpfb), found in Danio rerio (Zebrafish).